Consider the following 359-residue polypeptide: DNA-directed RNA polymerase RPB3-11 homolog (359 aa).

The protein in the N-terminal section; belongs to the archaeal RpoD/eukaryotic RPB3 RNA polymerase subunit family. It in the C-terminal section; belongs to the archaeal RpoL/eukaryotic RPB11/RPC19 RNA polymerase subunit family. Part of the viral DNA-directed RNA polymerase that consists of 8 polII-like subunits (RPB1, RPB2, RPB3, RPB5, RPB6, RPB7, RPB9, RPB10), a capping enzyme and a termination factor.

It localises to the host cytoplasm. It is found in the virion. In terms of biological role, component of the DNA-directed RNA polymerase (RNAP) that catalyzes the transcription in the cytoplasm of viral DNA into RNA using the four ribonucleoside triphosphates as substrates. The sequence is that of DNA-directed RNA polymerase RPB3-11 homolog from Ornithodoros (relapsing fever ticks).